The primary structure comprises 305 residues: Glutaminase (305 aa).

Substrate is bound by residues Ser-61, Asn-113, Glu-158, Asn-165, Tyr-189, Tyr-241, and Val-259.

This sequence belongs to the glutaminase family. Homotetramer.

It catalyses the reaction L-glutamine + H2O = L-glutamate + NH4(+). The polypeptide is Glutaminase (Clostridium botulinum (strain Kyoto / Type A2)).